The sequence spans 376 residues: MLSRVSARSYSSAAQSIKLTAREAPGNLSTLSVVVNNAGSKAGKSGVAHLLSKYNFLNNEAKSALRFTRESELLGGIVSSDVTRDSIVLKTQFLKQDLPYFVEALGNVLTKTSFRDHELPETVLPAAKAQNAEAQGSNAFKAFESLHEISFRKGLGNPLYYDGTSPISVDEIKQFASEAYNTSNVSVFGSGVNEGDLKKFIGESAFSALPAGSSKTTPVELHNGKESRIRAAGGSVALIGVPIKTADFAKYEVLSAAIGSTYLPGSSAPLSQIPGAISKVLKYQDAGLFVICVCNSDAAVVAQGVKAAKKAVDSVSASDLSSATKAAELAVALQSRFESPVDVKIDASAAKSPAKLSEFNYVAVGNVDLLPYANEL.

The transit peptide at 1–16 (MLSRVSARSYSSAAQS) directs the protein to the mitochondrion.

Belongs to the peptidase M16 family. UQCRC2/QCR2 subfamily. In terms of assembly, component of the ubiquinol-cytochrome c oxidoreductase (cytochrome b-c1 complex, complex III, CIII), a multisubunit enzyme composed of 3 respiratory subunits cytochrome b, cytochrome c1 and Rieske protein, 2 core protein subunits, and additional low-molecular weight protein subunits. The complex exists as an obligatory dimer and forms supercomplexes (SCs) in the inner mitochondrial membrane with cytochrome c oxidase (complex IV, CIV).

Its subcellular location is the mitochondrion inner membrane. In terms of biological role, component of the ubiquinol-cytochrome c oxidoreductase, a multisubunit transmembrane complex that is part of the mitochondrial electron transport chain which drives oxidative phosphorylation. The respiratory chain contains 3 multisubunit complexes succinate dehydrogenase (complex II, CII), ubiquinol-cytochrome c oxidoreductase (cytochrome b-c1 complex, complex III, CIII) and cytochrome c oxidase (complex IV, CIV), that cooperate to transfer electrons derived from NADH and succinate to molecular oxygen, creating an electrochemical gradient over the inner membrane that drives transmembrane transport and the ATP synthase. The cytochrome b-c1 complex catalyzes electron transfer from ubiquinol to cytochrome c, linking this redox reaction to translocation of protons across the mitochondrial inner membrane, with protons being carried across the membrane as hydrogens on the quinol. In the process called Q cycle, 2 protons are consumed from the matrix, 4 protons are released into the intermembrane space and 2 electrons are passed to cytochrome c. In Debaryomyces hansenii (strain ATCC 36239 / CBS 767 / BCRC 21394 / JCM 1990 / NBRC 0083 / IGC 2968) (Yeast), this protein is Cytochrome b-c1 complex subunit 2, mitochondrial (QCR2).